The primary structure comprises 96 residues: Co-chaperonin GroES (96 aa).

It belongs to the GroES chaperonin family. As to quaternary structure, heptamer of 7 subunits arranged in a ring. Interacts with the chaperonin GroEL.

It is found in the cytoplasm. Its function is as follows. Together with the chaperonin GroEL, plays an essential role in assisting protein folding. The GroEL-GroES system forms a nano-cage that allows encapsulation of the non-native substrate proteins and provides a physical environment optimized to promote and accelerate protein folding. GroES binds to the apical surface of the GroEL ring, thereby capping the opening of the GroEL channel. This chain is Co-chaperonin GroES, found in Actinobacillus pleuropneumoniae serotype 7 (strain AP76).